Reading from the N-terminus, the 185-residue chain is NADH-quinone oxidoreductase subunit B (185 aa).

[4Fe-4S] cluster is bound by residues C64, C65, C129, and C159.

Belongs to the complex I 20 kDa subunit family. In terms of assembly, NDH-1 is composed of 14 different subunits. Subunits NuoB, C, D, E, F, and G constitute the peripheral sector of the complex. [4Fe-4S] cluster is required as a cofactor.

Its subcellular location is the cell inner membrane. It carries out the reaction a quinone + NADH + 5 H(+)(in) = a quinol + NAD(+) + 4 H(+)(out). NDH-1 shuttles electrons from NADH, via FMN and iron-sulfur (Fe-S) centers, to quinones in the respiratory chain. Couples the redox reaction to proton translocation (for every two electrons transferred, four hydrogen ions are translocated across the cytoplasmic membrane), and thus conserves the redox energy in a proton gradient. In Rhodospirillum rubrum (strain ATCC 11170 / ATH 1.1.1 / DSM 467 / LMG 4362 / NCIMB 8255 / S1), this protein is NADH-quinone oxidoreductase subunit B.